The following is a 210-amino-acid chain: Replication protein RepB (210 aa).

It belongs to the Gram-positive plasmids replication protein type 2 family.

Its function is as follows. Is essential for plasmid replication. Nicks the positive strand at the plus origin of replication. The sequence is that of Replication protein RepB (repB) from Streptococcus agalactiae.